The chain runs to 327 residues: Phenylalanine--tRNA ligase alpha subunit (327 aa).

Glutamate 252 contributes to the Mg(2+) binding site.

Belongs to the class-II aminoacyl-tRNA synthetase family. Phe-tRNA synthetase alpha subunit type 1 subfamily. As to quaternary structure, tetramer of two alpha and two beta subunits. It depends on Mg(2+) as a cofactor.

The protein resides in the cytoplasm. It carries out the reaction tRNA(Phe) + L-phenylalanine + ATP = L-phenylalanyl-tRNA(Phe) + AMP + diphosphate + H(+). This Pectobacterium carotovorum subsp. carotovorum (strain PC1) protein is Phenylalanine--tRNA ligase alpha subunit.